The primary structure comprises 530 residues: Netrin-G2 (530 aa).

The N-terminal stretch at 1-17 (MLHLLALFLHCLPLASG) is a signal peptide. 3 cysteine pairs are disulfide-bonded: Cys22–Cys39, Cys61–Cys81, and Cys69–Cys77. The region spanning 35–286 (EFYACQPKVM…AISNIEVIGR (252 aa)) is the Laminin N-terminal domain. The NGL discriminant loop I stretch occupies residues 69–88 (CSHENPYLCSNECDASNPDL). N-linked (GlcNAc...) asparagine glycosylation is found at Asn122 and Asn128. A disulfide bridge connects residues Cys171 and Cys195. The tract at residues 201–203 (RWA) is NGL discriminant loop II. The segment at 264 to 267 (TYVQ) is NGL discriminant loop III. Cystine bridges form between Cys287-Cys296, Cys289-Cys305, Cys307-Cys316, Cys319-Cys344, Cys353-Cys362, Cys355-Cys373, Cys376-Cys385, Cys388-Cys406, Cys409-Cys421, Cys411-Cys427, Cys429-Cys438, Cys441-Cys451, Cys456-Cys469, Cys463-Cys475, and Cys477-Cys486. Laminin EGF-like domains lie at 287 to 346 (CKCN…ACAT), 353 to 408 (CECY…VCIE), and 409 to 453 (CNCN…GCYP). Asn310 is a glycosylation site (N-linked (GlcNAc...) asparagine). The N-linked (GlcNAc...) asparagine glycan is linked to Asn395. An N-linked (GlcNAc...) asparagine glycan is attached at Asn422. A lipid anchor (GPI-anchor amidated glycine) is attached at Gly507. The propeptide at 508 to 530 (AAPRPATLLGCLLLLGLAARLGR) is removed in mature form.

In terms of assembly, interacts with LRRC4. Post-translationally, N-glycosylated.

The protein resides in the cell membrane. Involved in controlling patterning and neuronal circuit formation at the laminar, cellular, subcellular and synaptic levels. Promotes neurite outgrowth of both axons and dendrites. This is Netrin-G2 from Homo sapiens (Human).